The following is a 131-amino-acid chain: Profilin-7 (131 aa).

An intrachain disulfide couples C13 to C115. The short motif at 81–97 (AVIRGKKGSGGITVKKT) is the Involved in PIP2 interaction element. A Phosphothreonine modification is found at T111.

It belongs to the profilin family. As to quaternary structure, occurs in many kinds of cells as a complex with monomeric actin in a 1:1 ratio. Post-translationally, phosphorylated by MAP kinases.

Its subcellular location is the cytoplasm. It localises to the cytoskeleton. Functionally, binds to actin and affects the structure of the cytoskeleton. At high concentrations, profilin prevents the polymerization of actin, whereas it enhances it at low concentrations. This Zea mays (Maize) protein is Profilin-7.